Here is a 457-residue protein sequence, read N- to C-terminus: Glutamate--tRNA ligase 2 (457 aa).

A 'HIGH' region motif is present at residues 9-19 (PSPTGRIHIGN). Positions 250–254 (GLSKR) match the 'KMSKS' region motif. K253 is an ATP binding site.

Belongs to the class-I aminoacyl-tRNA synthetase family. Glutamate--tRNA ligase type 1 subfamily. In terms of assembly, monomer.

It localises to the cytoplasm. It catalyses the reaction tRNA(Glu) + L-glutamate + ATP = L-glutamyl-tRNA(Glu) + AMP + diphosphate. In terms of biological role, catalyzes the attachment of glutamate to tRNA(Glu) in a two-step reaction: glutamate is first activated by ATP to form Glu-AMP and then transferred to the acceptor end of tRNA(Glu). The sequence is that of Glutamate--tRNA ligase 2 from Mesorhizobium japonicum (strain LMG 29417 / CECT 9101 / MAFF 303099) (Mesorhizobium loti (strain MAFF 303099)).